The sequence spans 126 residues: Thioredoxin-like 3-3 (126 aa).

Residues 1 to 24 (MRKQESEGANLEFESKSNDNGNVK) are disordered. Residues 5-126 (ESEGANLEFE…RLHDRLWLHS (122 aa)) enclose the Thioredoxin domain. Residues C55 and C58 each act as nucleophile in the active site. C55 and C58 are oxidised to a cystine.

Belongs to the thioredoxin family.

Probable thiol-disulfide oxidoreductase that may participate in various redox reactions. The protein is Thioredoxin-like 3-3 of Arabidopsis thaliana (Mouse-ear cress).